Reading from the N-terminus, the 583-residue chain is 2-succinyl-5-enolpyruvyl-6-hydroxy-3-cyclohexene-1-carboxylate synthase (583 aa).

The protein belongs to the TPP enzyme family. MenD subfamily. Homodimer. Mg(2+) serves as cofactor. Requires Mn(2+) as cofactor. Thiamine diphosphate is required as a cofactor.

The enzyme catalyses isochorismate + 2-oxoglutarate + H(+) = 5-enolpyruvoyl-6-hydroxy-2-succinyl-cyclohex-3-ene-1-carboxylate + CO2. It participates in quinol/quinone metabolism; 1,4-dihydroxy-2-naphthoate biosynthesis; 1,4-dihydroxy-2-naphthoate from chorismate: step 2/7. It functions in the pathway quinol/quinone metabolism; menaquinone biosynthesis. Functionally, catalyzes the thiamine diphosphate-dependent decarboxylation of 2-oxoglutarate and the subsequent addition of the resulting succinic semialdehyde-thiamine pyrophosphate anion to isochorismate to yield 2-succinyl-5-enolpyruvyl-6-hydroxy-3-cyclohexene-1-carboxylate (SEPHCHC). This is 2-succinyl-5-enolpyruvyl-6-hydroxy-3-cyclohexene-1-carboxylate synthase from Chlorobium phaeovibrioides (strain DSM 265 / 1930) (Prosthecochloris vibrioformis (strain DSM 265)).